We begin with the raw amino-acid sequence, 575 residues long: DNA-directed RNA polymerase subunit beta' (575 aa).

Belongs to the RNA polymerase beta' chain family. In plastids the minimal PEP RNA polymerase catalytic core is composed of four subunits: alpha, beta, beta', and beta''. When a (nuclear-encoded) sigma factor is associated with the core the holoenzyme is formed, which can initiate transcription.

It localises to the plastid. The protein resides in the apicoplast. The catalysed reaction is RNA(n) + a ribonucleoside 5'-triphosphate = RNA(n+1) + diphosphate. DNA-dependent RNA polymerase catalyzes the transcription of DNA into RNA using the four ribonucleoside triphosphates as substrates. The polypeptide is DNA-directed RNA polymerase subunit beta' (rpoC1) (Plasmodium falciparum (isolate 3D7)).